The sequence spans 396 residues: Elongation factor Tu (396 aa).

The tr-type G domain occupies 10 to 206; sequence KEHVNIGTIG…AVDTWIETPV (197 aa). Residues 19 to 26 are G1; sequence GHVDHGKT. 19–26 is a binding site for GTP; that stretch reads GHVDHGKT. T26 serves as a coordination point for Mg(2+). Positions 60–64 are G2; sequence GITIN. Residues 81 to 84 are G3; the sequence is DCPG. GTP is bound by residues 81–85 and 136–139; these read DCPGH and NKCD. The tract at residues 136 to 139 is G4; the sequence is NKCD. The segment at 176–178 is G5; the sequence is SAL.

The protein belongs to the TRAFAC class translation factor GTPase superfamily. Classic translation factor GTPase family. EF-Tu/EF-1A subfamily. In terms of assembly, monomer.

The protein resides in the cytoplasm. It catalyses the reaction GTP + H2O = GDP + phosphate + H(+). GTP hydrolase that promotes the GTP-dependent binding of aminoacyl-tRNA to the A-site of ribosomes during protein biosynthesis. This Mycoplasmopsis agalactiae (strain NCTC 10123 / CIP 59.7 / PG2) (Mycoplasma agalactiae) protein is Elongation factor Tu.